A 260-amino-acid chain; its full sequence is ProSAAS (260 aa).

Positions 1–33 are cleaved as a signal peptide; sequence MAGSPLLCGPRAGGVGLLVLLLLGLLRLPPTLS. The proSAAS(1-180) stretch occupies residues 34-215; that stretch reads ARPVKEPRSL…SSEPEAAPAP (182 aa). Disordered stretches follow at residues 162-187 and 206-234; these read AALRPRPPVYDDGPTGPDVEDAADET and SSEPEAAPAPRRLRRAVDQDLGPEVPPEN. The segment at 221-260 is C-terminal inhibitory domain; interacts with PCSK1; that stretch reads AVDQDLGPEVPPENVLGALLRVKRLENSSPQAPARRLLPP. The Sufficient for inhibition of PCSK1 signature appears at 239-244; sequence LLRVKR.

Interacts via the C-terminal inhibitory domain with PCSK1 65 kDa form. Proteolytically cleaved in the Golgi. Big SAAS, Little SAAS, PEN and Big LEN are the major processed peptides in proSAAS-overexpressing PC-12 phaeochromocytoma cells (lacking PCSK1 and PCSK2 endopeptidases). Peptides corresponding to PEN and a proSAAS aa 40-59 have been detected in wild-type PC-12 cells. As to expression, expressed in adult brain (all major structural regions), adrenal gland (medulla) and spinal cord (dorsal and ventral horn). Expressed in pancreatic islands.

Its subcellular location is the secreted. The protein resides in the golgi apparatus. It is found in the trans-Golgi network. Functionally, may function in the control of the neuroendocrine secretory pathway. Proposed be a specific endogenous inhibitor of PCSK1. ProSAAS and Big PEN-LEN, both containing the C-terminal inhibitory domain, but not the processed peptides reduce PCSK1 activity in the endoplasmic reticulum and Golgi. It reduces the activity of the 87 kDa form but not the autocatalytically derived 65 kDa form of PCSK1. Subsequent processing of proSAAS may eliminate the inhibition. Slows down convertase-mediated processing of proopiomelanocortin and proenkephalin. May control the intracellular timing of PCSK1 rather than its total level of activity. Its function is as follows. Endogenous ligand for GPR171. Neuropeptide involved in the regulation of feeding. This chain is ProSAAS (Pcsk1n), found in Rattus norvegicus (Rat).